Here is a 452-residue protein sequence, read N- to C-terminus: PTS system N-acetylglucosamine-specific EIICB component (452 aa).

Residues 1-361 (MLSFLQKLGK…LNLKTPGRED (361 aa)) form the PTS EIIC type-1 domain. Transmembrane regions (helical) follow at residues 8–28 (LGKSFMLPIAVLPAVGIILAL), 42–62 (AGTAVFDHLPLIFAIGIAIGI), 91–111 (TNNMAVFGGIIAGLIAGYTYN), 130–150 (LVPILTAIITIILAGIFGVVW), 163–183 (WMLGLGGIGAGIFGLFNRLLI), 223–243 (MTGFFPIMMFGLPAACLAMVV), 257–277 (MIGFALTAFITGITEPIEFAF), 279–299 (FLSPLLYAVHAVLTGLSLFIV), and 329–349 (LLLLVGICYAAVYFIVFYVLI). The PTS EIIB type-1 domain maps to 375-452 (DVNENIMLKG…AAEELRAAVK (78 aa)). The active-site Phosphocysteine intermediate; for EIIB activity is C397.

In terms of assembly, interacts with FloT.

The protein localises to the cell membrane. The protein resides in the membrane raft. The enzyme catalyses N(pros)-phospho-L-histidyl-[protein] + N-acetyl-D-glucosamine(out) = N-acetyl-D-glucosamine 6-phosphate(in) + L-histidyl-[protein]. Its function is as follows. The phosphoenolpyruvate-dependent sugar phosphotransferase system (sugar PTS), a major carbohydrate active -transport system, catalyzes the phosphorylation of incoming sugar substrates concomitantly with their translocation across the cell membrane. This system is involved in N-acetylglucosamine transport. The protein is PTS system N-acetylglucosamine-specific EIICB component (nagP) of Bacillus subtilis (strain 168).